The following is a 176-amino-acid chain: Putative ribosomal protein eS10-like (176 aa).

A disordered region spans residues 104–176 (TLHRSRPETG…CGRGRGQPPQ (73 aa)). Residues 108–139 (SRPETGRPRPKGLEGKRPARLTRREADRDTYR) are compositionally biased toward basic and acidic residues.

Belongs to the eukaryotic ribosomal protein eS10 family.

This chain is Putative ribosomal protein eS10-like (RPS10P5), found in Homo sapiens (Human).